A 194-amino-acid chain; its full sequence is dCTP deaminase (194 aa).

Residues 110–115 (RSSLAR), Asp128, 136–138 (VLE), Tyr171, Lys178, and Gln182 each bind dCTP. Catalysis depends on Glu138, which acts as the Proton donor/acceptor. Positions 174-194 (RKSSKYKDQQEAVASRISQDK) are disordered.

The protein belongs to the dCTP deaminase family. As to quaternary structure, homotrimer.

The enzyme catalyses dCTP + H2O + H(+) = dUTP + NH4(+). The protein operates within pyrimidine metabolism; dUMP biosynthesis; dUMP from dCTP (dUTP route): step 1/2. Functionally, catalyzes the deamination of dCTP to dUTP. In Shewanella frigidimarina (strain NCIMB 400), this protein is dCTP deaminase.